Reading from the N-terminus, the 324-residue chain is UDP-N-acetylenolpyruvoylglucosamine reductase (324 aa).

Residues 38-231 (AGGSARRLYV…SRERIRSLLK (194 aa)) enclose the FAD-binding PCMH-type domain. Arg195 is an active-site residue. The active-site Proton donor is the Ser246. Residue Glu316 is part of the active site.

Belongs to the MurB family. The cofactor is FAD.

It is found in the cytoplasm. It carries out the reaction UDP-N-acetyl-alpha-D-muramate + NADP(+) = UDP-N-acetyl-3-O-(1-carboxyvinyl)-alpha-D-glucosamine + NADPH + H(+). It participates in cell wall biogenesis; peptidoglycan biosynthesis. Its function is as follows. Cell wall formation. This chain is UDP-N-acetylenolpyruvoylglucosamine reductase, found in Thiobacillus denitrificans (strain ATCC 25259 / T1).